The sequence spans 143 residues: Large ribosomal subunit protein uL11 (143 aa).

It belongs to the universal ribosomal protein uL11 family. As to quaternary structure, part of the ribosomal stalk of the 50S ribosomal subunit. Interacts with L10 and the large rRNA to form the base of the stalk. L10 forms an elongated spine to which L12 dimers bind in a sequential fashion forming a multimeric L10(L12)X complex. In terms of processing, one or more lysine residues are methylated.

Forms part of the ribosomal stalk which helps the ribosome interact with GTP-bound translation factors. The protein is Large ribosomal subunit protein uL11 of Paracidovorax citrulli (strain AAC00-1) (Acidovorax citrulli).